Here is a 436-residue protein sequence, read N- to C-terminus: Histidinol dehydrogenase (436 aa).

Residues Y135, Q196, and N219 each contribute to the NAD(+) site. Substrate contacts are provided by S242, Q264, and H267. Zn(2+) contacts are provided by Q264 and H267. Catalysis depends on proton acceptor residues E332 and H333. The substrate site is built by H333, D366, E420, and H425. D366 contributes to the Zn(2+) binding site. H425 contributes to the Zn(2+) binding site.

The protein belongs to the histidinol dehydrogenase family. Zn(2+) serves as cofactor.

The enzyme catalyses L-histidinol + 2 NAD(+) + H2O = L-histidine + 2 NADH + 3 H(+). Its pathway is amino-acid biosynthesis; L-histidine biosynthesis; L-histidine from 5-phospho-alpha-D-ribose 1-diphosphate: step 9/9. In terms of biological role, catalyzes the sequential NAD-dependent oxidations of L-histidinol to L-histidinaldehyde and then to L-histidine. The sequence is that of Histidinol dehydrogenase from Methylococcus capsulatus (strain ATCC 33009 / NCIMB 11132 / Bath).